A 295-amino-acid chain; its full sequence is Acetylglutamate kinase (295 aa).

Residues 67-68 (GG), Arg89, and Asn191 each bind substrate.

It belongs to the acetylglutamate kinase family. ArgB subfamily.

The protein localises to the cytoplasm. The catalysed reaction is N-acetyl-L-glutamate + ATP = N-acetyl-L-glutamyl 5-phosphate + ADP. The protein operates within amino-acid biosynthesis; L-arginine biosynthesis; N(2)-acetyl-L-ornithine from L-glutamate: step 2/4. Functionally, catalyzes the ATP-dependent phosphorylation of N-acetyl-L-glutamate. In Nitrosomonas eutropha (strain DSM 101675 / C91 / Nm57), this protein is Acetylglutamate kinase.